The chain runs to 278 residues: Transmembrane protein 41A-B (278 aa).

An N-terminal signal peptide occupies residues 1–23; sequence MRSIWGLIVLVAAATFYLYLLSA. The next 5 helical transmembrane spans lie at 78-98, 101-121, 164-184, 191-211, and 230-250; these read GYVFILFCSAYLYKQSFAIPG, FLNMLSGALFGPLHGLIIACT, LFFFLLFLRFFPMTPNWFLNV, IPIPIFFFSILIGLIPYNFIC, and WFTLLQLLLIACVALLPGALI.

It belongs to the TMEM41 family.

It localises to the membrane. This is Transmembrane protein 41A-B from Danio rerio (Zebrafish).